A 458-amino-acid chain; its full sequence is 3-isopropylmalate dehydratase large subunit (458 aa).

[4Fe-4S] cluster contacts are provided by Cys339, Cys399, and Cys402.

This sequence belongs to the aconitase/IPM isomerase family. LeuC type 1 subfamily. As to quaternary structure, heterodimer of LeuC and LeuD. [4Fe-4S] cluster is required as a cofactor.

It carries out the reaction (2R,3S)-3-isopropylmalate = (2S)-2-isopropylmalate. It participates in amino-acid biosynthesis; L-leucine biosynthesis; L-leucine from 3-methyl-2-oxobutanoate: step 2/4. In terms of biological role, catalyzes the isomerization between 2-isopropylmalate and 3-isopropylmalate, via the formation of 2-isopropylmaleate. In Lactococcus lactis subsp. cremoris (strain MG1363), this protein is 3-isopropylmalate dehydratase large subunit.